The following is a 303-amino-acid chain: Probable cell division protein WhiA (303 aa).

A DNA-binding region (H-T-H motif) is located at residues 272-303; sequence SIQQVADALEFPITKSGVNHRLRKINKIADDL.

The protein belongs to the WhiA family.

In terms of biological role, involved in cell division and chromosome segregation. In Streptococcus pyogenes serotype M6 (strain ATCC BAA-946 / MGAS10394), this protein is Probable cell division protein WhiA.